A 108-amino-acid polypeptide reads, in one-letter code: Nucleoid-associated protein IL1848 (108 aa).

Disordered stretches follow at residues 1 to 26 (MFKG…AQEE) and 88 to 108 (KERM…KMPF). The segment covering 9–26 (MMKQAQQMQERMQQAQEE) has biased composition (low complexity).

It belongs to the YbaB/EbfC family. As to quaternary structure, homodimer.

It localises to the cytoplasm. The protein localises to the nucleoid. Binds to DNA and alters its conformation. May be involved in regulation of gene expression, nucleoid organization and DNA protection. The protein is Nucleoid-associated protein IL1848 of Idiomarina loihiensis (strain ATCC BAA-735 / DSM 15497 / L2-TR).